Reading from the N-terminus, the 58-residue chain is Probable ferredoxin (58 aa).

4Fe-4S ferredoxin-type domains follow at residues 2–30 (VAKVNVDLCTGCGSCVDECPAAAISLNDD) and 31–58 (GIATVDESECLDCGSCEDACPNNAITIE). Positions 10, 13, 16, 20, 40, 43, 46, and 50 each coordinate [4Fe-4S] cluster.

The cofactor is [4Fe-4S] cluster.

Functionally, ferredoxins are iron-sulfur proteins that transfer electrons in a wide variety of metabolic reactions. The protein is Probable ferredoxin of Methanosarcina thermophila.